A 69-amino-acid polypeptide reads, in one-letter code: ATP synthase F(0) complex subunit 8 (69 aa).

The chain crosses the membrane as a helical span at residues 8 to 24; sequence TWLLTITLMILALFCIY. Lys-55 carries the N6-acetyllysine; alternate modification. The residue at position 55 (Lys-55) is an N6-succinyllysine; alternate. Position 58 is an N6-acetyllysine (Lys-58).

It belongs to the ATPase protein 8 family. In terms of assembly, component of the ATP synthase complex composed at least of ATP5F1A/subunit alpha, ATP5F1B/subunit beta, ATP5MC1/subunit c (homooctomer), MT-ATP6/subunit a, MT-ATP8/subunit 8, ATP5ME/subunit e, ATP5MF/subunit f, ATP5MG/subunit g, ATP5MK/subunit k, ATP5MJ/subunit j, ATP5F1C/subunit gamma, ATP5F1D/subunit delta, ATP5F1E/subunit epsilon, ATP5PF/subunit F6, ATP5PB/subunit b, ATP5PD/subunit d, ATP5PO/subunit OSCP. ATP synthase complex consists of a soluble F(1) head domain (subunits alpha(3) and beta(3)) - the catalytic core - and a membrane F(0) domain - the membrane proton channel (subunits c, a, 8, e, f, g, k and j). These two domains are linked by a central stalk (subunits gamma, delta, and epsilon) rotating inside the F1 region and a stationary peripheral stalk (subunits F6, b, d, and OSCP). Interacts with PRICKLE3.

Its subcellular location is the mitochondrion membrane. Its function is as follows. Subunit 8, of the mitochondrial membrane ATP synthase complex (F(1)F(0) ATP synthase or Complex V) that produces ATP from ADP in the presence of a proton gradient across the membrane which is generated by electron transport complexes of the respiratory chain. ATP synthase complex consist of a soluble F(1) head domain - the catalytic core - and a membrane F(1) domain - the membrane proton channel. These two domains are linked by a central stalk rotating inside the F(1) region and a stationary peripheral stalk. During catalysis, ATP synthesis in the catalytic domain of F(1) is coupled via a rotary mechanism of the central stalk subunits to proton translocation. In vivo, can only synthesize ATP although its ATP hydrolase activity can be activated artificially in vitro. Part of the complex F(0) domain. The chain is ATP synthase F(0) complex subunit 8 from Osphranter robustus (Wallaroo).